A 128-amino-acid chain; its full sequence is Diacylglycerol kinase (128 aa).

Glu-34 provides a ligand contact to a divalent metal cation. 2 consecutive transmembrane segments (helical) span residues 35-55 and 58-78; these read SAFR…SYLA and FLEW…ELIN. Glu-75 acts as the Proton acceptor in catalysis. An a divalent metal cation-binding site is contributed by Glu-82. The chain crosses the membrane as a helical span at residues 107–127; the sequence is QLIGLIFWTLIWGRYLLALYL.

The protein belongs to the bacterial diacylglycerol kinase family. It depends on Mg(2+) as a cofactor.

Its subcellular location is the cell inner membrane. It catalyses the reaction a 1,2-diacyl-sn-glycerol + ATP = a 1,2-diacyl-sn-glycero-3-phosphate + ADP + H(+). In terms of biological role, catalyzes the ATP-dependent phosphorylation of sn-l,2-diacylglycerol (DAG) to phosphatidic acid. Involved in the recycling of diacylglycerol produced as a by-product during membrane-derived oligosaccharide (MDO) biosynthesis. This Helicobacter pylori (strain ATCC 700392 / 26695) (Campylobacter pylori) protein is Diacylglycerol kinase (dgkA).